Consider the following 1040-residue polypeptide: Multidrug resistance protein MdtB (1040 aa).

A run of 12 helical transmembrane segments spans residues F16 to I36, L347 to A367, I369 to L389, L396 to I416, I440 to F460, F472 to P492, W537 to I557, L863 to I883, F888 to A908, I911 to V931, I968 to V988, and I998 to I1018.

The protein belongs to the resistance-nodulation-cell division (RND) (TC 2.A.6) family. MdtB subfamily. In terms of assembly, part of a tripartite efflux system composed of MdtA, MdtB and MdtC. MdtB forms a heteromultimer with MdtC.

It localises to the cell inner membrane. Functionally, the MdtABC tripartite complex confers resistance against novobiocin and deoxycholate. In Escherichia coli O7:K1 (strain IAI39 / ExPEC), this protein is Multidrug resistance protein MdtB.